Here is a 473-residue protein sequence, read N- to C-terminus: LETM1 domain-containing protein mdm28, mitochondrial (473 aa).

The transit peptide at 1–73 (MLRNRLFKTP…FYNIGSSRLY (73 aa)) directs the protein to the mitochondrion. Residues 74–161 (STETPTPSKV…LTRTLKDIGR (88 aa)) are Mitochondrial intermembrane-facing. A helical transmembrane segment spans residues 162-182 (LVPFSVFVVVPFAELLLPIAV). Residues 183 to 473 (KLFPNLLPST…ESNIPKNERK (291 aa)) lie on the Mitochondrial matrix side of the membrane. Residues 205–398 (QLRKTRNEVS…LQDTLASIPD (194 aa)) enclose the Letm1 RBD domain. A disordered region spans residues 430-473 (EEEAEHVAEHPDLAKKQTEENKATSKPAVSAKSPESNIPKNERK). Residues 434–452 (EHVAEHPDLAKKQTEENKA) show a composition bias toward basic and acidic residues. The span at 462-473 (SPESNIPKNERK) shows a compositional bias: polar residues.

It localises to the mitochondrion inner membrane. Involved in mitochondrial potassium homeostasis through the mitochondrial K(+)/H(+) exchange regulation. This chain is LETM1 domain-containing protein mdm28, mitochondrial (mdm28), found in Schizosaccharomyces pombe (strain 972 / ATCC 24843) (Fission yeast).